The primary structure comprises 128 residues: 2-iminobutanoate/2-iminopropanoate deaminase (128 aa).

It belongs to the RutC family.

Its subcellular location is the cytoplasm. The enzyme catalyses 2-iminobutanoate + H2O = 2-oxobutanoate + NH4(+). The catalysed reaction is 2-iminopropanoate + H2O = pyruvate + NH4(+). Its function is as follows. Catalyzes the hydrolytic deamination of enamine/imine intermediates that form during the course of normal metabolism. May facilitate the release of ammonia from these potentially toxic reactive metabolites, reducing their impact on cellular components. It may act on enamine/imine intermediates formed by several types of pyridoxal-5'-phosphate-dependent dehydratases including L-threonine dehydratase. Preferentially digests Leu and Met in cooperation with L-amino acid oxidase, but digests Phe poorly. The chain is 2-iminobutanoate/2-iminopropanoate deaminase from Dermatophagoides farinae (American house dust mite).